Consider the following 388-residue polypeptide: DNA ADP-ribosyl transferase-DNA ADP-ribosyl glycohydrolase fusion protein (388 aa).

The DarT domain occupies 6–197; the sequence is RELYYITHID…PVIPDPTFFF (192 aa). NAD(+) contacts are provided by residues 10-12 and Arg50; that span reads YIT. The interval 34–52 is NAD(+)-binding element; that stretch reads QSINCKKVYDNSIVLKRKS. Arg50 serves as the catalytic Proton acceptor. The ADP-ribosylating turn-turn loop stretch occupies residues 107 to 152; it reads TDGNAASSETQIYRKSEIKNIKNIISVKDMEYWREEDGSKRKIMAE. Residue Glu152 is part of the active site. A Macro domain is found at 196–376; sequence FFLPNREIKL…IYLPLEKRIP (181 aa). Residues 215-216, 227-229, Thr301, 339-343, and 371-372 contribute to the ADP-D-ribose site; these read DM, SVN, GCGLG, and LE.

It in the N-terminal section; belongs to the DarT ADP-ribosyltransferase family. In the C-terminal section; belongs to the DarG ADP-ribosyl glycohydrolase family.

It catalyses the reaction an N-(ADP-alpha-D-ribosyl)-thymidine in DNA + H2O = a thymidine in DNA + ADP-D-ribose. The catalysed reaction is a thymidine in DNA + NAD(+) = an N-(ADP-alpha-D-ribosyl)-thymidine in DNA + nicotinamide + H(+). In terms of biological role, a fusion protein of the toxic and antitoxin components of a hybrid type II/IV toxin-antitoxin (TA) system. The N-terminal domain ADP-ribosylates ssDNA on a thymidine residue, while the C-terminal domain removes the modification, neutralizing the toxic effect. The polypeptide is DNA ADP-ribosyl transferase-DNA ADP-ribosyl glycohydrolase fusion protein (Thermosipho africanus (strain H17ap60334)).